A 135-amino-acid chain; its full sequence is Phosphoribosyl-AMP cyclohydrolase (135 aa).

Asp-89 serves as a coordination point for Mg(2+). Position 90 (Cys-90) interacts with Zn(2+). Mg(2+) is bound by residues Asp-91 and Asp-93. Residues Cys-106 and Cys-113 each contribute to the Zn(2+) site.

It belongs to the PRA-CH family. As to quaternary structure, homodimer. Mg(2+) serves as cofactor. Zn(2+) is required as a cofactor.

It is found in the cytoplasm. The enzyme catalyses 1-(5-phospho-beta-D-ribosyl)-5'-AMP + H2O = 1-(5-phospho-beta-D-ribosyl)-5-[(5-phospho-beta-D-ribosylamino)methylideneamino]imidazole-4-carboxamide. The protein operates within amino-acid biosynthesis; L-histidine biosynthesis; L-histidine from 5-phospho-alpha-D-ribose 1-diphosphate: step 3/9. In terms of biological role, catalyzes the hydrolysis of the adenine ring of phosphoribosyl-AMP. This is Phosphoribosyl-AMP cyclohydrolase from Bifidobacterium adolescentis (strain ATCC 15703 / DSM 20083 / NCTC 11814 / E194a).